We begin with the raw amino-acid sequence, 217 residues long: Probable transaldolase (217 aa).

Catalysis depends on Lys-84, which acts as the Schiff-base intermediate with substrate.

Belongs to the transaldolase family. Type 3B subfamily.

It is found in the cytoplasm. The catalysed reaction is D-sedoheptulose 7-phosphate + D-glyceraldehyde 3-phosphate = D-erythrose 4-phosphate + beta-D-fructose 6-phosphate. It functions in the pathway carbohydrate degradation; pentose phosphate pathway; D-glyceraldehyde 3-phosphate and beta-D-fructose 6-phosphate from D-ribose 5-phosphate and D-xylulose 5-phosphate (non-oxidative stage): step 2/3. Its function is as follows. Transaldolase is important for the balance of metabolites in the pentose-phosphate pathway. This Roseiflexus sp. (strain RS-1) protein is Probable transaldolase.